A 238-amino-acid polypeptide reads, in one-letter code: Ribonuclease PH (238 aa).

Residues Arg86 and Gly124–Arg126 each bind phosphate.

The protein belongs to the RNase PH family. In terms of assembly, homohexameric ring arranged as a trimer of dimers.

The catalysed reaction is tRNA(n+1) + phosphate = tRNA(n) + a ribonucleoside 5'-diphosphate. Its function is as follows. Phosphorolytic 3'-5' exoribonuclease that plays an important role in tRNA 3'-end maturation. Removes nucleotide residues following the 3'-CCA terminus of tRNAs; can also add nucleotides to the ends of RNA molecules by using nucleoside diphosphates as substrates, but this may not be physiologically important. Probably plays a role in initiation of 16S rRNA degradation (leading to ribosome degradation) during starvation. This chain is Ribonuclease PH, found in Trichlorobacter lovleyi (strain ATCC BAA-1151 / DSM 17278 / SZ) (Geobacter lovleyi).